The following is a 396-amino-acid chain: Ornithine aminotransferase (396 aa).

Lys255 bears the N6-(pyridoxal phosphate)lysine mark.

This sequence belongs to the class-III pyridoxal-phosphate-dependent aminotransferase family. OAT subfamily. The cofactor is pyridoxal 5'-phosphate.

It is found in the cytoplasm. The enzyme catalyses a 2-oxocarboxylate + L-ornithine = L-glutamate 5-semialdehyde + an L-alpha-amino acid. It participates in amino-acid biosynthesis; L-proline biosynthesis; L-glutamate 5-semialdehyde from L-ornithine: step 1/1. In terms of biological role, catalyzes the interconversion of ornithine to glutamate semialdehyde. The chain is Ornithine aminotransferase from Bacillus cereus (strain 03BB102).